The primary structure comprises 20 residues: Collagenolytic protease 28 kDa (20 aa).

Residues 1–20 (IVGGQEASPGSWPXQVGLFF) enclose the Peptidase S1 domain.

It belongs to the peptidase S1 family.

It catalyses the reaction Hydrolysis of proteins, with broad specificity for peptide bonds. Native collagen is cleaved about 75% of the length of the molecule from the N-terminus. Low activity on small molecule substrates of both trypsin and chymotrypsin.. In terms of biological role, this enzyme is a serine protease capable of degrading the native triple helix of collagen. The polypeptide is Collagenolytic protease 28 kDa (Paralithodes camtschaticus (Red king crab)).